Reading from the N-terminus, the 401-residue chain is Phosphoglycerate kinase (401 aa).

Substrate is bound by residues 20–22, arginine 35, 58–61, arginine 117, and arginine 154; these read DFN and HLGR. Residues lysine 204, glycine 298, glutamate 329, and 358-361 each bind ATP; that span reads GGDS.

The protein belongs to the phosphoglycerate kinase family. Monomer.

It localises to the cytoplasm. It catalyses the reaction (2R)-3-phosphoglycerate + ATP = (2R)-3-phospho-glyceroyl phosphate + ADP. It functions in the pathway carbohydrate degradation; glycolysis; pyruvate from D-glyceraldehyde 3-phosphate: step 2/5. The chain is Phosphoglycerate kinase from Bifidobacterium longum (strain NCC 2705).